Reading from the N-terminus, the 811-residue chain is Zinc finger CCCH domain-containing protein 11A (811 aa).

3 C3H1-type zinc fingers span residues 2–30, 32–58, and 61–87; these read PNQG…HCEA, LGNE…HMEI, and KRSE…HHNR. A Phosphoserine modification is found at serine 109. Glycyl lysine isopeptide (Lys-Gly) (interchain with G-Cter in SUMO2) cross-links involve residues lysine 115 and lysine 125. Position 133 is a phosphoserine (serine 133). Disordered stretches follow at residues 140-195, 224-258, 286-352, and 368-434; these read MKVE…GLRV, KKMK…KENV, GKRK…EKVN, and ERAS…TCIK. Residue lysine 141 forms a Glycyl lysine isopeptide (Lys-Gly) (interchain with G-Cter in SUMO2) linkage. Phosphoserine occurs at positions 150 and 172. Residues 161–176 show a composition bias toward acidic residues; that stretch reads ADDDEDDDDQFSEEGD. A Phosphoserine modification is found at serine 291. 2 stretches are compositionally biased toward basic and acidic residues: residues 310–323 and 368–391; these read KKVE…DKTP and ERAS…KTDD. Threonine 322 carries the post-translational modification Phosphothreonine. Residues 363-424 adopt a coiled-coil conformation; the sequence is EEILLERASQ…KHRQQEAERQ (62 aa). Serine 371 carries the post-translational modification Phosphoserine. Residues 392 to 403 are compositionally biased toward polar residues; sequence STSGARSSSTIR. Basic and acidic residues predominate over residues 418–434; sequence QQEAERQKSKKDTTCIK. Residue lysine 479 forms a Glycyl lysine isopeptide (Lys-Gly) (interchain with G-Cter in SUMO2) linkage. Residues 483-550 are disordered; the sequence is ALRVQQSSES…KEASGETTGV (68 aa). The segment covering 487–499 has biased composition (low complexity); sequence QQSSESSTSSPSQ. Lysine 620 is covalently cross-linked (Glycyl lysine isopeptide (Lys-Gly) (interchain with G-Cter in SUMO2)). The disordered stretch occupies residues 716–769; it reads TVPEAENPRDSLVLPPTQSSSDSSPPEVSGPSSSQMSMKTRRLSSASTGKPQLS. Residues 730 to 749 are compositionally biased toward low complexity; sequence PPTQSSSDSSPPEVSGPSSS. Residues 750–766 are compositionally biased toward polar residues; sequence QMSMKTRRLSSASTGKP.

As to quaternary structure, interacts with TREX complex components THOC2, DDX39 and POLDIP3; the interactions are ATP-dependent. Interacts with PABPN1; this interaction retains ZC3H11A in nuclear speckles. Interacts with KPNA3.

The protein resides in the nucleus speckle. In terms of biological role, through its association with TREX complex components, may participate in the export and post-transcriptional coordination of selected mRNA transcripts, including those required to maintain the metabolic processes in embryonic cells. Binds RNA. This Pongo abelii (Sumatran orangutan) protein is Zinc finger CCCH domain-containing protein 11A (ZC3H11A).